Here is a 71-residue protein sequence, read N- to C-terminus: ATP synthase F(0) complex subunit e, mitochondrial (71 aa).

N6-acetyllysine is present on Lys34.

Belongs to the ATPase e subunit family. Component of the ATP synthase complex composed at least of ATP5F1A/subunit alpha, ATP5F1B/subunit beta, ATP5MC1/subunit c (homooctomer), MT-ATP6/subunit a, MT-ATP8/subunit 8, ATP5ME/subunit e, ATP5MF/subunit f, ATP5MG/subunit g, ATP5MK/subunit k, ATP5MJ/subunit j, ATP5F1C/subunit gamma, ATP5F1D/subunit delta, ATP5F1E/subunit epsilon, ATP5PF/subunit F6, ATP5PB/subunit b, ATP5PD/subunit d, ATP5PO/subunit OSCP. ATP synthase complex consists of a soluble F(1) head domain (subunits alpha(3) and beta(3)) - the catalytic core - and a membrane F(0) domain - the membrane proton channel (subunits c, a, 8, e, f, g, k and j). These two domains are linked by a central stalk (subunits gamma, delta, and epsilon) rotating inside the F1 region and a stationary peripheral stalk (subunits F6, b, d, and OSCP).

It localises to the mitochondrion. Its subcellular location is the mitochondrion inner membrane. In terms of biological role, subunit e, of the mitochondrial membrane ATP synthase complex (F(1)F(0) ATP synthase or Complex V) that produces ATP from ADP in the presence of a proton gradient across the membrane which is generated by electron transport complexes of the respiratory chain. ATP synthase complex consist of a soluble F(1) head domain - the catalytic core - and a membrane F(1) domain - the membrane proton channel. These two domains are linked by a central stalk rotating inside the F(1) region and a stationary peripheral stalk. During catalysis, ATP synthesis in the catalytic domain of F(1) is coupled via a rotary mechanism of the central stalk subunits to proton translocation. In vivo, can only synthesize ATP although its ATP hydrolase activity can be activated artificially in vitro. Part of the complex F(0) domain. The polypeptide is ATP synthase F(0) complex subunit e, mitochondrial (Bos taurus (Bovine)).